We begin with the raw amino-acid sequence, 168 residues long: Ribonuclease H (168 aa).

Residues 10–151 form the RNase H type-1 domain; it reads NNIPVKIYTD…ADKLATNGKI (142 aa). Asp19, Glu57, Asp79, and Asp143 together coordinate Mg(2+).

It belongs to the RNase H family. In terms of assembly, monomer. The cofactor is Mg(2+).

The protein resides in the cytoplasm. The enzyme catalyses Endonucleolytic cleavage to 5'-phosphomonoester.. In terms of biological role, endonuclease that specifically degrades the RNA of RNA-DNA hybrids. The sequence is that of Ribonuclease H from Orientia tsutsugamushi (strain Boryong) (Rickettsia tsutsugamushi).